Consider the following 294-residue polypeptide: MSVISMKNLLETGVHFGHQTRKWNPKMAPYVFTARNGIHIIDLQKTVQKAKEAYDALKKLTSEGKKVLFVGTKKQARGAIEREAIRSNMFFINNRWPGGLLTNWNTVKRSIARLKKLEGMEADNSFEKEVKTKKEVLTLRRELEKLRKTLGGIKDMATIPEIMFVIDPKKEEIAVKEARKLGLKIFAVVDTNCDPELIDYPIPGNDDAIRAISLFLETMSNAVIEGTGGVVEQPRFSEDLDSEALALEYQGEYDESGKFIMDEDPDSKKTKTAEEPSATIEPSTTTTVEVDQNE.

Basic and acidic residues predominate over residues 256–274; that stretch reads SGKFIMDEDPDSKKTKTAE. The segment at 256–294 is disordered; sequence SGKFIMDEDPDSKKTKTAEEPSATIEPSTTTTVEVDQNE. Residues 280 to 294 are compositionally biased toward polar residues; it reads IEPSTTTTVEVDQNE.

The protein belongs to the universal ribosomal protein uS2 family.

The chain is Small ribosomal subunit protein uS2 from Leptospira interrogans serogroup Icterohaemorrhagiae serovar Lai (strain 56601).